A 325-amino-acid chain; its full sequence is Lipoyl synthase (325 aa).

7 residues coordinate [4Fe-4S] cluster: cysteine 68, cysteine 73, cysteine 79, cysteine 94, cysteine 98, cysteine 101, and serine 308. Residues 80–297 (FGGGTATFMI…ARVANELGFT (218 aa)) form the Radical SAM core domain.

This sequence belongs to the radical SAM superfamily. Lipoyl synthase family. Requires [4Fe-4S] cluster as cofactor.

The protein resides in the cytoplasm. The catalysed reaction is [[Fe-S] cluster scaffold protein carrying a second [4Fe-4S](2+) cluster] + N(6)-octanoyl-L-lysyl-[protein] + 2 oxidized [2Fe-2S]-[ferredoxin] + 2 S-adenosyl-L-methionine + 4 H(+) = [[Fe-S] cluster scaffold protein] + N(6)-[(R)-dihydrolipoyl]-L-lysyl-[protein] + 4 Fe(3+) + 2 hydrogen sulfide + 2 5'-deoxyadenosine + 2 L-methionine + 2 reduced [2Fe-2S]-[ferredoxin]. It functions in the pathway protein modification; protein lipoylation via endogenous pathway; protein N(6)-(lipoyl)lysine from octanoyl-[acyl-carrier-protein]: step 2/2. Functionally, catalyzes the radical-mediated insertion of two sulfur atoms into the C-6 and C-8 positions of the octanoyl moiety bound to the lipoyl domains of lipoate-dependent enzymes, thereby converting the octanoylated domains into lipoylated derivatives. The chain is Lipoyl synthase from Alcanivorax borkumensis (strain ATCC 700651 / DSM 11573 / NCIMB 13689 / SK2).